The sequence spans 522 residues: Peptide chain release factor 3 (522 aa).

A tr-type G domain is found at 9-276 (KKRRTFAIIS…SFVNLAPAPQ (268 aa)). GTP contacts are provided by residues 18-25 (SHPDAGKT), 86-90 (DTPGH), and 140-143 (NKLD).

The protein belongs to the TRAFAC class translation factor GTPase superfamily. Classic translation factor GTPase family. PrfC subfamily.

It localises to the cytoplasm. Its function is as follows. Increases the formation of ribosomal termination complexes and stimulates activities of RF-1 and RF-2. It binds guanine nucleotides and has strong preference for UGA stop codons. It may interact directly with the ribosome. The stimulation of RF-1 and RF-2 is significantly reduced by GTP and GDP, but not by GMP. The chain is Peptide chain release factor 3 from Lactobacillus gasseri (strain ATCC 33323 / DSM 20243 / BCRC 14619 / CIP 102991 / JCM 1131 / KCTC 3163 / NCIMB 11718 / NCTC 13722 / AM63).